Here is a 300-residue protein sequence, read N- to C-terminus: Bifunctional protein FolD 2 (300 aa).

NADP(+)-binding positions include 165–167 (GRS), serine 190, and isoleucine 231.

This sequence belongs to the tetrahydrofolate dehydrogenase/cyclohydrolase family. As to quaternary structure, homodimer.

It catalyses the reaction (6R)-5,10-methylene-5,6,7,8-tetrahydrofolate + NADP(+) = (6R)-5,10-methenyltetrahydrofolate + NADPH. The catalysed reaction is (6R)-5,10-methenyltetrahydrofolate + H2O = (6R)-10-formyltetrahydrofolate + H(+). It participates in one-carbon metabolism; tetrahydrofolate interconversion. Its function is as follows. Catalyzes the oxidation of 5,10-methylenetetrahydrofolate to 5,10-methenyltetrahydrofolate and then the hydrolysis of 5,10-methenyltetrahydrofolate to 10-formyltetrahydrofolate. This chain is Bifunctional protein FolD 2, found in Pseudomonas savastanoi pv. phaseolicola (strain 1448A / Race 6) (Pseudomonas syringae pv. phaseolicola (strain 1448A / Race 6)).